Reading from the N-terminus, the 95-residue chain is Ribonuclease P protein component 1 (95 aa).

It belongs to the eukaryotic/archaeal RNase P protein component 1 family. As to quaternary structure, consists of a catalytic RNA component and at least 4 protein subunits. Forms a subcomplex with Rnp4 which stimulates the catalytic RNA.

Its subcellular location is the cytoplasm. The catalysed reaction is Endonucleolytic cleavage of RNA, removing 5'-extranucleotides from tRNA precursor.. In terms of biological role, part of ribonuclease P, a protein complex that generates mature tRNA molecules by cleaving their 5'-ends. This Methanocaldococcus jannaschii (strain ATCC 43067 / DSM 2661 / JAL-1 / JCM 10045 / NBRC 100440) (Methanococcus jannaschii) protein is Ribonuclease P protein component 1.